The sequence spans 113 residues: ATP-dependent Clp protease adapter protein ClpS (113 aa).

It belongs to the ClpS family. Binds to the N-terminal domain of the chaperone ClpA.

Its function is as follows. Involved in the modulation of the specificity of the ClpAP-mediated ATP-dependent protein degradation. This Corynebacterium diphtheriae (strain ATCC 700971 / NCTC 13129 / Biotype gravis) protein is ATP-dependent Clp protease adapter protein ClpS.